Consider the following 377-residue polypeptide: Alanine dehydrogenase (377 aa).

The substrate site is built by Arg-15 and Lys-74. His-95 functions as the Proton donor/acceptor in the catalytic mechanism. Residues Ser-133, Asp-197, Arg-202, Ser-219, 238 to 239 (VL), 266 to 269 (VAID), and 304 to 307 (VGNM) contribute to the NAD(+) site. Asp-269 serves as the catalytic Proton donor/acceptor.

The protein belongs to the AlaDH/PNT family. As to quaternary structure, homohexamer.

The catalysed reaction is L-alanine + NAD(+) + H2O = pyruvate + NH4(+) + NADH + H(+). Its pathway is organosulfur degradation; alkanesulfonate degradation. Involved in an anaerobic respiration pathway that converts the sulfonate taurine (2-aminoethanesulfonate) to ammonia, acetate and sulfide. Acts as an alanine dehydrogenase that regenerates pyruvate, the amino group acceptor for the taurine--pyruvate aminotransferase enzyme, and liberates ammonia. In Bilophila wadsworthia (strain 3_1_6), this protein is Alanine dehydrogenase.